A 124-amino-acid chain; its full sequence is Photoactive yellow protein (124 aa).

In terms of domain architecture, PAS spans 22-85 (AESLPFGAVL…GEFLKFNRTG (64 aa)). Residue Cys-68 is modified to S-(4-hydroxycinnamyl)cysteine.

Belongs to the photoactive yellow protein family. Post-translationally, the 4-hydroxycinnamic acid (p-coumaric acid) chromophore is covalently bound via a thioester linkage.

In terms of biological role, this photoactive protein is a photoreceptor with kinetics similar to that of rhodopsin. This is Photoactive yellow protein (pyp) from Rhodobacter capsulatus (strain ATCC BAA-309 / NBRC 16581 / SB1003).